The following is a 137-amino-acid chain: Ribosome-binding factor A (137 aa).

Belongs to the RbfA family. Monomer. Binds 30S ribosomal subunits, but not 50S ribosomal subunits or 70S ribosomes.

It localises to the cytoplasm. In terms of biological role, one of several proteins that assist in the late maturation steps of the functional core of the 30S ribosomal subunit. Associates with free 30S ribosomal subunits (but not with 30S subunits that are part of 70S ribosomes or polysomes). Required for efficient processing of 16S rRNA. May interact with the 5'-terminal helix region of 16S rRNA. The protein is Ribosome-binding factor A of Synechococcus sp. (strain ATCC 27144 / PCC 6301 / SAUG 1402/1) (Anacystis nidulans).